The following is a 336-amino-acid chain: Delta(1)-pyrroline-2-carboxylate reductase (336 aa).

The active-site Charge relay system is S47. H48 acts as the Proton donor in catalysis. R52 serves as a coordination point for substrate. 120–124 (HFSAL) contacts NADP(+). Position 160 (T160) interacts with substrate. 178–180 (DFA) is a binding site for NADP(+). Substrate is bound at residue 186 to 187 (RG). The Charge relay system role is filled by D188. NADP(+) is bound by residues 229–230 (HK) and 304–310 (RLPSQRR).

It belongs to the LDH2/MDH2 oxidoreductase family. As to quaternary structure, homodimer.

It catalyses the reaction L-proline + NAD(+) = 1-pyrroline-2-carboxylate + NADH + H(+). The enzyme catalyses L-proline + NADP(+) = 1-pyrroline-2-carboxylate + NADPH + H(+). Catalyzes the reduction of Delta(1)-pyrroline-2-carboxylate (Pyr2C) to L-proline, using NADPH as the electron donor. May be involved in a degradation pathway that converts trans-3-hydroxy-L-proline (t3LHyp) to L-proline. The chain is Delta(1)-pyrroline-2-carboxylate reductase from Pseudomonas fluorescens (strain ATCC BAA-477 / NRRL B-23932 / Pf-5).